The primary structure comprises 422 residues: N-acylglucosamine 2-epimerase (422 aa).

The segment at Leu185–Leu206 is leucine-zipper.

It belongs to the N-acylglucosamine 2-epimerase family. In terms of assembly, homodimer. Forms a heterodimer with renin and inhibits its activity.

It catalyses the reaction an N-acyl-D-glucosamine = an N-acyl-D-mannosamine. It functions in the pathway amino-sugar metabolism; N-acetylneuraminate degradation. Functionally, catalyzes the interconversion of N-acetylglucosamine to N-acetylmannosamine. Involved in the N-glycolylneuraminic acid (Neu5Gc) degradation pathway. The polypeptide is N-acylglucosamine 2-epimerase (RENBP) (Bos taurus (Bovine)).